A 627-amino-acid polypeptide reads, in one-letter code: WPP domain-interacting tail-anchored protein 2 (627 aa).

3 coiled-coil regions span residues 81–152, 188–218, and 312–542; these read CGIL…RRTL, LEKS…KLHY, and TLRE…KILR. The tract at residues 577 to 597 is disordered; the sequence is SLQEDERTREEPEKQSVSEKS. Basic and acidic residues predominate over residues 580 to 597; it reads EDERTREEPEKQSVSEKS. The chain crosses the membrane as a helical span at residues 606–626; sequence LKHILVVALVFVLFCSFFGVT.

Component of Ran complexes at least composed of WIT1 or WIT2, RANGAP1 or RANGAP2, and WIP1 or WIP2 or WIP3. Interacts with KAKU1. Core component of the LINC complex which is composed of inner nuclear membrane SUN domain-containing proteins coupled to outer nuclear membrane WIP and WIT proteins. The LINC complex also involves nucleoskeletal proteins CRWN/LINC and possibly KAKU4 and the cytoskeletal myosin KAKU1. Interacts with WIP1, WIP2 and WIP3. Ubiquitous.

The protein resides in the membrane. Together with WIT1, required for the nuclear envelope docking of RANGAP proteins in root tips. Plays a role in nuclear shape determination. As component of the SUN-WIP-WIT2-KAKU1 complex, mediates the transfer of cytoplasmic forces to the nuclear envelope (NE), leading to nuclear shape changes. The protein is WPP domain-interacting tail-anchored protein 2 (WIT2) of Arabidopsis thaliana (Mouse-ear cress).